A 652-amino-acid polypeptide reads, in one-letter code: DNA ligase (652 aa).

NAD(+) is bound by residues 29-33 (DSEYD), 78-79 (SL), and E107. K109 acts as the N6-AMP-lysine intermediate in catalysis. Residues R130, E164, K278, and K302 each contribute to the NAD(+) site. C395, C398, C413, and C418 together coordinate Zn(2+). Positions 577-652 (VADAALSGLT…VRDEAWLESL (76 aa)) constitute a BRCT domain.

It belongs to the NAD-dependent DNA ligase family. LigA subfamily. It depends on Mg(2+) as a cofactor. Requires Mn(2+) as cofactor.

The catalysed reaction is NAD(+) + (deoxyribonucleotide)n-3'-hydroxyl + 5'-phospho-(deoxyribonucleotide)m = (deoxyribonucleotide)n+m + AMP + beta-nicotinamide D-nucleotide.. Functionally, DNA ligase that catalyzes the formation of phosphodiester linkages between 5'-phosphoryl and 3'-hydroxyl groups in double-stranded DNA using NAD as a coenzyme and as the energy source for the reaction. It is essential for DNA replication and repair of damaged DNA. This Streptococcus pneumoniae (strain 70585) protein is DNA ligase.